A 152-amino-acid polypeptide reads, in one-letter code: SsrA-binding protein (152 aa).

The protein belongs to the SmpB family.

Its subcellular location is the cytoplasm. Its function is as follows. Required for rescue of stalled ribosomes mediated by trans-translation. Binds to transfer-messenger RNA (tmRNA), required for stable association of tmRNA with ribosomes. tmRNA and SmpB together mimic tRNA shape, replacing the anticodon stem-loop with SmpB. tmRNA is encoded by the ssrA gene; the 2 termini fold to resemble tRNA(Ala) and it encodes a 'tag peptide', a short internal open reading frame. During trans-translation Ala-aminoacylated tmRNA acts like a tRNA, entering the A-site of stalled ribosomes, displacing the stalled mRNA. The ribosome then switches to translate the ORF on the tmRNA; the nascent peptide is terminated with the 'tag peptide' encoded by the tmRNA and targeted for degradation. The ribosome is freed to recommence translation, which seems to be the essential function of trans-translation. In Helicobacter pylori (strain J99 / ATCC 700824) (Campylobacter pylori J99), this protein is SsrA-binding protein.